A 259-amino-acid chain; its full sequence is Type III pantothenate kinase (259 aa).

6 to 13 (DTGNTNTV) is an ATP binding site. Position 107 to 110 (107 to 110 (GPDR)) interacts with substrate. Aspartate 109 acts as the Proton acceptor in catalysis. Residue aspartate 129 participates in K(+) binding. Residue threonine 132 participates in ATP binding. Threonine 184 contributes to the substrate binding site.

This sequence belongs to the type III pantothenate kinase family. Homodimer. NH4(+) is required as a cofactor. K(+) serves as cofactor.

The protein localises to the cytoplasm. It catalyses the reaction (R)-pantothenate + ATP = (R)-4'-phosphopantothenate + ADP + H(+). The protein operates within cofactor biosynthesis; coenzyme A biosynthesis; CoA from (R)-pantothenate: step 1/5. Catalyzes the phosphorylation of pantothenate (Pan), the first step in CoA biosynthesis. The sequence is that of Type III pantothenate kinase from Paracoccus denitrificans (strain Pd 1222).